The chain runs to 420 residues: Glycerol-3-phosphate dehydrogenase [NAD(+)] (420 aa).

Residues 16-21, F48, and F119 contribute to the NAD(+) site; that span reads GSGNWG. K142 contacts substrate. Position 175 (A175) interacts with NAD(+). The segment at 190–217 is disordered; that stretch reads YDPPPMDNSRAPTPRSNSPANGNGIAPL. Polar residues predominate over residues 199–210; it reads RAPTPRSNSPAN. The Proton acceptor role is filled by K278. Residues R344 and Q373 each contribute to the NAD(+) site. Position 344–345 (344–345) interacts with substrate; it reads RN.

Belongs to the NAD-dependent glycerol-3-phosphate dehydrogenase family.

It carries out the reaction sn-glycerol 3-phosphate + NAD(+) = dihydroxyacetone phosphate + NADH + H(+). The sequence is that of Glycerol-3-phosphate dehydrogenase [NAD(+)] from Colletotrichum gloeosporioides (Anthracnose fungus).